We begin with the raw amino-acid sequence, 743 residues long: Serine-rich coiled-coil domain-containing protein 1 (743 aa).

Disordered regions lie at residues 1–125 (MGDS…SRNK) and 156–175 (KSEG…SVKQ). Residues 29 to 56 (LPSSPSSSNTVGVHSSSPSSTNSSSGST) show a composition bias toward low complexity. The span at 81–102 (EPTNQNLSISNGAQPGQSSMQK) shows a compositional bias: polar residues. The stretch at 672–713 (MKDECSMLKLQLKEKDELISQLQEELEKVQHLQKAFASRVDK) forms a coiled coil.

This sequence belongs to the CCSER family.

This chain is Serine-rich coiled-coil domain-containing protein 1 (CCSER1), found in Bos taurus (Bovine).